Reading from the N-terminus, the 168-residue chain is Ribosome maturation factor RimP (168 aa).

It belongs to the RimP family.

Its subcellular location is the cytoplasm. Functionally, required for maturation of 30S ribosomal subunits. The protein is Ribosome maturation factor RimP of Rickettsia bellii (strain OSU 85-389).